A 327-amino-acid chain; its full sequence is MTHSLRVIFAGTPEFAAAALAAIHEAGFPVPLVLTQPDRPAGRGMKLQASAVKRYALERGMAVAQPPSLRRAGKYPAEAVAALDLLHATPHDVMVVAAYGLLLPQEVLELPRHGCINIHASLLPRWRGAAPIHRAIEAGDAETGVTLMQMDAGLDTGAMLHEARVAIAPDDTTATLHDKLAAAGARLVVDALVELERTGALAATPQPADGVTYAEKIGKHEAALDWRKPAAALARQVRAFDPFPGGAGTLDGATLKLWAADAVPGRDDAAPGTIVDIGPDGVVIACGEGALRVTQLQKPGGKRLPAREFLAGAPLAVGQRFAPADAA.

(6S)-5,6,7,8-tetrahydrofolate is bound at residue 121 to 124 (SLLP).

It belongs to the Fmt family.

The catalysed reaction is L-methionyl-tRNA(fMet) + (6R)-10-formyltetrahydrofolate = N-formyl-L-methionyl-tRNA(fMet) + (6S)-5,6,7,8-tetrahydrofolate + H(+). Functionally, attaches a formyl group to the free amino group of methionyl-tRNA(fMet). The formyl group appears to play a dual role in the initiator identity of N-formylmethionyl-tRNA by promoting its recognition by IF2 and preventing the misappropriation of this tRNA by the elongation apparatus. The chain is Methionyl-tRNA formyltransferase from Burkholderia pseudomallei (strain 668).